The chain runs to 453 residues: UDP-N-acetylmuramate--L-alanyl-gamma-D-glutamyl-meso-2,6-diaminoheptandioate ligase (453 aa).

111 to 117 (GTHGKTT) contributes to the ATP binding site.

This sequence belongs to the MurCDEF family. Mpl subfamily. Mg(2+) is required as a cofactor.

The catalysed reaction is UDP-N-acetyl-alpha-D-muramate + L-alanyl-gamma-D-glutamyl-meso-2,6-diaminopimelate + ATP = UDP-N-acetyl-alpha-D-muramoyl-L-alanyl-gamma-D-glutamyl-meso-2,6-diaminopimelate + ADP + phosphate + H(+). It participates in cell wall biogenesis; peptidoglycan recycling. Reutilizes the intact tripeptide L-alanyl-gamma-D-glutamyl-meso-diaminopimelate by linking it to UDP-N-acetylmuramate. The protein is UDP-N-acetylmuramate--L-alanyl-gamma-D-glutamyl-meso-2,6-diaminoheptandioate ligase of Haemophilus influenzae (strain ATCC 51907 / DSM 11121 / KW20 / Rd).